A 391-amino-acid polypeptide reads, in one-letter code: Protein-glutamate methylesterase/protein-glutamine glutaminase (391 aa).

Residues 4–121 (KVLVVDDSSF…ARNNEDAIKL (118 aa)) form the Response regulatory domain. D55 carries the post-translational modification 4-aspartylphosphate. The 195-residue stretch at 197-391 (SGKHYQLVAI…IRLKTEVGCG (195 aa)) folds into the CheB-type methylesterase domain. Active-site residues include S209, H236, and D333.

The protein belongs to the CheB family. Phosphorylated by CheA. Phosphorylation of the N-terminal regulatory domain activates the methylesterase activity.

Its subcellular location is the cytoplasm. The catalysed reaction is [protein]-L-glutamate 5-O-methyl ester + H2O = L-glutamyl-[protein] + methanol + H(+). The enzyme catalyses L-glutaminyl-[protein] + H2O = L-glutamyl-[protein] + NH4(+). In terms of biological role, involved in chemotaxis. Part of a chemotaxis signal transduction system that modulates chemotaxis in response to various stimuli. Catalyzes the demethylation of specific methylglutamate residues introduced into the chemoreceptors (methyl-accepting chemotaxis proteins or MCP) by CheR. Also mediates the irreversible deamidation of specific glutamine residues to glutamic acid. This Pseudoalteromonas translucida (strain TAC 125) protein is Protein-glutamate methylesterase/protein-glutamine glutaminase.